Here is a 474-residue protein sequence, read N- to C-terminus: tRNA-2-methylthio-N(6)-dimethylallyladenosine synthase (474 aa).

One can recognise an MTTase N-terminal domain in the interval 3–120 (QKLHIKTWGC…LPEMINQIRG (118 aa)). The [4Fe-4S] cluster site is built by Cys12, Cys49, Cys83, Cys157, Cys161, and Cys164. The region spanning 143-375 (KAEGPTAFVS…QQRINNQAAK (233 aa)) is the Radical SAM core domain. The TRAM domain occupies 378-441 (RAMLGTEQRV…TNSLRGDVIR (64 aa)).

The protein belongs to the methylthiotransferase family. MiaB subfamily. Monomer. The cofactor is [4Fe-4S] cluster.

It is found in the cytoplasm. The enzyme catalyses N(6)-dimethylallyladenosine(37) in tRNA + (sulfur carrier)-SH + AH2 + 2 S-adenosyl-L-methionine = 2-methylsulfanyl-N(6)-dimethylallyladenosine(37) in tRNA + (sulfur carrier)-H + 5'-deoxyadenosine + L-methionine + A + S-adenosyl-L-homocysteine + 2 H(+). In terms of biological role, catalyzes the methylthiolation of N6-(dimethylallyl)adenosine (i(6)A), leading to the formation of 2-methylthio-N6-(dimethylallyl)adenosine (ms(2)i(6)A) at position 37 in tRNAs that read codons beginning with uridine. This is tRNA-2-methylthio-N(6)-dimethylallyladenosine synthase from Actinobacillus succinogenes (strain ATCC 55618 / DSM 22257 / CCUG 43843 / 130Z).